A 344-amino-acid chain; its full sequence is Secreted LysM effector LysM2 (344 aa).

An N-terminal signal peptide occupies residues 1–24 (MMAPKSLQTGLLILLLAKLKLAWG). One can recognise a LysM 1 domain in the interval 36-80 (YEAAASSGDTCTSFAAEWGLTEETFASLNPSAACPSLVAGQNYCM). A compositionally biased stretch (low complexity) spans 88 to 134 (STTSSSSSTTSSSTTSSSTTSSSTTSSSTTTSSFTTTTASETTSTAA). The interval 88–141 (STTSSSSSTTSSSTTSSSTTSSSTTSSSTTTSSFTTTTASETTSTAANGVTTPM) is disordered. LysM domains follow at residues 153-199 (KFDL…YVCV), 216-262 (KFDL…YVCV), and 296-342 (KFWL…YICV).

Belongs to the secreted LysM effector family.

Might have a role in sequestration of chitin oligosaccharides (breakdown products of fungal cell walls that are released during invasion and act as triggers of host immunity) to dampen host defense. This is Secreted LysM effector LysM2 from Penicillium expansum (Blue mold rot fungus).